The primary structure comprises 34 residues: Photosystem II reaction center protein M (34 aa).

A helical membrane pass occupies residues 5-25; sequence ILAFIATALFVLIPTAFLIIL.

It belongs to the PsbM family. As to quaternary structure, PSII is composed of 1 copy each of membrane proteins PsbA, PsbB, PsbC, PsbD, PsbE, PsbF, PsbH, PsbI, PsbJ, PsbK, PsbL, PsbM, PsbT, PsbX, PsbY, PsbZ, Psb30/Ycf12, at least 3 peripheral proteins of the oxygen-evolving complex and a large number of cofactors. It forms dimeric complexes.

The protein localises to the plastid. The protein resides in the chloroplast thylakoid membrane. In terms of biological role, one of the components of the core complex of photosystem II (PSII). PSII is a light-driven water:plastoquinone oxidoreductase that uses light energy to abstract electrons from H(2)O, generating O(2) and a proton gradient subsequently used for ATP formation. It consists of a core antenna complex that captures photons, and an electron transfer chain that converts photonic excitation into a charge separation. This subunit is found at the monomer-monomer interface. The sequence is that of Photosystem II reaction center protein M from Zygnema circumcarinatum (Green alga).